We begin with the raw amino-acid sequence, 379 residues long: Cytochrome b (379 aa).

The next 4 membrane-spanning stretches (helical) occupy residues 33–53 (FGSLLGACLTIQIITGLFLAM), 77–98 (WTIRYLHANGASMFFLCLFIHV), 113–133 (WNVGIILLFSVMATAFMGYVL), and 178–198 (FFALHFILPFIISALVMIHLL). Positions 83 and 97 each coordinate heme b. Residues His182 and His196 each coordinate heme b. A ubiquinone is bound at residue His201. 4 consecutive transmembrane segments (helical) span residues 226–246 (TKDFLGLLLLILLLMTTALFY), 288–308 (LGGVLALILSILILMIIPFLQ), 320–340 (LSQFLFWILVADLLTLTWIGG), and 347–367 (FINIGQMASMLYFFLMIFIMP).

This sequence belongs to the cytochrome b family. As to quaternary structure, the cytochrome bc1 complex contains 11 subunits: 3 respiratory subunits (MT-CYB, CYC1 and UQCRFS1), 2 core proteins (UQCRC1 and UQCRC2) and 6 low-molecular weight proteins (UQCRH/QCR6, UQCRB/QCR7, UQCRQ/QCR8, UQCR10/QCR9, UQCR11/QCR10 and a cleavage product of UQCRFS1). This cytochrome bc1 complex then forms a dimer. The cofactor is heme b.

Its subcellular location is the mitochondrion inner membrane. In terms of biological role, component of the ubiquinol-cytochrome c reductase complex (complex III or cytochrome b-c1 complex) that is part of the mitochondrial respiratory chain. The b-c1 complex mediates electron transfer from ubiquinol to cytochrome c. Contributes to the generation of a proton gradient across the mitochondrial membrane that is then used for ATP synthesis. This Lepilemur ankaranensis (Ankarana sportive lemur) protein is Cytochrome b (MT-CYB).